Here is a 628-residue protein sequence, read N- to C-terminus: Basal cell adhesion molecule (628 aa).

A signal peptide spans 1–31; that stretch reads MEPPDARAGARRAPRLLVLALLLAAPPGSKA. Ig-like V-type domains lie at 32–142 and 150–253; these read EVRL…ARLK and PEVS…RLDG. Residues 32-547 lie on the Extracellular side of the membrane; that stretch reads EVRLSVPPLV…GTVAPQTSQA (516 aa). 3 disulfide bridges follow: Cys53–Cys125, Cys172–Cys237, and Cys291–Cys337. Ig-like C2-type domains are found at residues 254-355, 355-441, and 448-538; these read PSFS…KTLE, ELRV…RSFR, and PELK…FHFG. 3 N-linked (GlcNAc...) asparagine glycosylation sites follow: Asn321, Asn330, and Asn378. 2 disulfides stabilise this stretch: Cys384-Cys424 and Cys473-Cys522. The helical transmembrane segment at 548–568 threads the bilayer; it reads GVAVMAVAISVALLLLVVAVF. Over 569 to 628 the chain is Cytoplasmic; sequence YCMRRKGRPGCCQWGEKGSPPPGEPKLSHSGSQRPEQTGLLMGSASGGAKHGSGGFGDEC. Positions 580–628 are disordered; it reads CQWGEKGSPPPGEPKLSHSGSQRPEQTGLLMGSASGGAKHGSGGFGDEC. 4 positions are modified to phosphoserine: Ser596, Ser598, Ser600, and Ser621. The segment covering 613–628 has biased composition (gly residues); the sequence is ASGGAKHGSGGFGDEC.

Homodimer. Interacts with ITGA4:ITGB1. Interacts with spectrins SPTA1 and SPTB1. In terms of processing, epinephrine-stimulated phosphorylation of Ser-621 by PKA enhances adhesion to laminin. Ser-621 can also be phosphorylated by AKT1.

The protein localises to the cell membrane. In terms of biological role, transmembrane glycoprotein that functions as both a receptor and an adhesion molecule playing a crucial role in cell adhesion, motility, migration and invasion. Extracellular domain enables binding to extracellular matrix proteins, such as laminin, integrin and other ligands while its intracellular domain interacts with cytoskeletal proteins like hemoglobin, facilitating cell signal transduction. Serves as a receptor for laminin alpha-5/LAMA5 to promote cell adhesion. Mechanistically, JAK2 induces BCAM phosphorylation and activates its adhesion to laminin by stimulating a Rap1/AKT signaling pathway in the absence of EPOR. In Bos taurus (Bovine), this protein is Basal cell adhesion molecule (BCAM).